We begin with the raw amino-acid sequence, 96 residues long: Small ribosomal subunit protein uS19 (96 aa).

The disordered stretch occupies residues 1–30; the sequence is MARSIKKGPFADKHLTKKVEDANKGNKKSV. Basic and acidic residues predominate over residues 9 to 24; that stretch reads PFADKHLTKKVEDANK.

It belongs to the universal ribosomal protein uS19 family.

Functionally, protein S19 forms a complex with S13 that binds strongly to the 16S ribosomal RNA. The chain is Small ribosomal subunit protein uS19 from Anaeromyxobacter sp. (strain Fw109-5).